The sequence spans 206 residues: Large ribosomal subunit protein uL4 (206 aa).

The protein belongs to the universal ribosomal protein uL4 family. Part of the 50S ribosomal subunit.

One of the primary rRNA binding proteins, this protein initially binds near the 5'-end of the 23S rRNA. It is important during the early stages of 50S assembly. It makes multiple contacts with different domains of the 23S rRNA in the assembled 50S subunit and ribosome. Functionally, forms part of the polypeptide exit tunnel. The chain is Large ribosomal subunit protein uL4 from Xanthobacter autotrophicus (strain ATCC BAA-1158 / Py2).